The chain runs to 617 residues: MAGDKGGGDGERRLRQPIVVVLGHVDHGKTTLLDKIRRTAVAAKEAGGITQHIGASIVPADVIEKIAEPLKKVIPVKLVIPGLLFIDTPGHELFSNLRRRGGSVADFAILVVDIMEGFKPQTYEALELLKERRVPFLIAANKIDRIPGWKPNPDAPFIETIRRQDPKVREILEQRVYEIVGKMYEAGLPAELFTRIKDFRRKIAIVPVSARTGEGIPELLAVLAGLTQTYLKERLRYAEGPAKGVVLEVKEMQGFGTVVDAVIYDGVLKKEDIIVVGGREGPIVTRVRALLMPAPLQDIRSREARFVQVDRVYAAAGVRIAAPGLDDVIAGSPIYAAESEEEARKLMEAVQREIEELRFRTENIGVVVKADTLGTLEALVEALRRRGVPVRLADIGPVSRSDVLDAAVTRKIDPYLGVVLAFNVKVLPEAEEEASRAGVKIFRESMIYKLIEDYEEWVKKEKEAERLKALNSLIRPGKFRILPGYVFRRSDPAIVGVEVLGGVIRPGYPVMDSQGRELGRIMAIKDRDRSLEEARLGAAVAVSIQGRILIGRHANEGDILYTNVPAQHAYKILTEFKDLVSKDELDVLREIAEIKRRAADHEYNKVLLRLKIKRVSQ.

The 218-residue stretch at 14-231 (LRQPIVVVLG…VLAGLTQTYL (218 aa)) folds into the tr-type G domain. The G1 stretch occupies residues 23 to 30 (GHVDHGKT). 23-30 (GHVDHGKT) is a binding site for GTP. A G2 region spans residues 48-52 (GITQH). Residues 87–90 (DTPG) form a G3 region. Residues 87-91 (DTPGH) and 141-144 (NKID) each bind GTP. The tract at residues 141–144 (NKID) is G4. A G5 region spans residues 209 to 211 (SAR).

Belongs to the TRAFAC class translation factor GTPase superfamily. Classic translation factor GTPase family. IF-2 subfamily.

Its function is as follows. Function in general translation initiation by promoting the binding of the formylmethionine-tRNA to ribosomes. Seems to function along with eIF-2. This Aeropyrum pernix (strain ATCC 700893 / DSM 11879 / JCM 9820 / NBRC 100138 / K1) protein is Probable translation initiation factor IF-2 (infB).